The primary structure comprises 200 residues: DNA-binding protein HupB (200 aa).

The interval 1 to 90 is bacterial histone-like domain; it reads MNKAELIDVL…PGAQFKAVVA (90 aa). Residues lysine 3, lysine 72, lysine 86, lysine 103, lysine 137, lysine 144, and lysine 156 each carry the N6-acetyllysine modification. The degenerate repeats region stretch occupies residues 101–200; sequence AVKRGVATSA…KVTAAKRGRK (100 aa). A disordered region spans residues 179–200; that stretch reads AKKAAVKKAPAKKVTAAKRGRK.

This sequence belongs to the bacterial histone-like protein family. Long actinobacterial subfamily. In terms of assembly, binds to human laminin-2. May also be methylated and possibly phosphorylated in vivo.

The protein localises to the cytoplasm. The protein resides in the nucleoid. It localises to the secreted. It is found in the cell wall. Its subcellular location is the cell surface. The enzyme catalyses 4 Fe(2+) + O2 + 4 H(+) = 4 Fe(3+) + 2 H2O. Functionally, a nucleoid-associated protein (NAP) that plays a role in local chromosome architecture and chromosome compactation. Required for biofilm formation, stress survival and possibly in cell wall assembly, probably influences transcription. RNase E and HupB jointly contribute to cellular adaptation to changing growth conditions and survival during antibiotic treatment and in the host. In terms of biological role, binds Fe(3+) but not Fe(2+). Has ferroxidase activity, converts Fe(2+) into Fe(3+) and in the presence of H(2)O(2) prevents the generation of hydroxyl radicals (the Fenton reaction). Protects DNA from damage in the presence of FeSO(4) and H(2)O(2). May function in iron storage. May be involved in entry into human Schwann cells. The protein is DNA-binding protein HupB of Mycobacterium leprae (strain TN).